The primary structure comprises 565 residues: Urocanate hydratase (565 aa).

NAD(+)-binding positions include 61-62 (GG), Gln139, 185-187 (GMG), Glu205, Arg210, 251-252 (NA), 272-276 (QTSAH), 282-283 (YL), and Tyr331. Cys419 is an active-site residue. A disordered region spans residues 453-472 (LDSGSVASPNRETESMRDGS). Over residues 463–472 (RETESMRDGS) the composition is skewed to basic and acidic residues. An NAD(+)-binding site is contributed by Gly501.

It belongs to the urocanase family. Requires NAD(+) as cofactor.

The protein localises to the cytoplasm. The enzyme catalyses 4-imidazolone-5-propanoate = trans-urocanate + H2O. The protein operates within amino-acid degradation; L-histidine degradation into L-glutamate; N-formimidoyl-L-glutamate from L-histidine: step 2/3. Catalyzes the conversion of urocanate to 4-imidazolone-5-propionate. This Pseudomonas syringae pv. tomato (strain ATCC BAA-871 / DC3000) protein is Urocanate hydratase.